The following is a 1216-amino-acid chain: DNA-directed RNA polymerase subunit beta' (1216 aa).

Positions 60, 62, 75, and 78 each coordinate Zn(2+). The Mg(2+) site is built by D450, D452, and D454. Residues C819, C893, C900, and C903 each coordinate Zn(2+).

The protein belongs to the RNA polymerase beta' chain family. The RNAP catalytic core consists of 2 alpha, 1 beta, 1 beta' and 1 omega subunit. When a sigma factor is associated with the core the holoenzyme is formed, which can initiate transcription. It depends on Mg(2+) as a cofactor. Zn(2+) serves as cofactor.

The catalysed reaction is RNA(n) + a ribonucleoside 5'-triphosphate = RNA(n+1) + diphosphate. In terms of biological role, DNA-dependent RNA polymerase catalyzes the transcription of DNA into RNA using the four ribonucleoside triphosphates as substrates. The chain is DNA-directed RNA polymerase subunit beta' from Streptococcus agalactiae serotype Ia (strain ATCC 27591 / A909 / CDC SS700).